The following is a 493-amino-acid chain: MAAIKEESDYDSSRSSLTAPDSRRSWISDIGSSSSVSARSFGGDTPASSCRYKPHKANQAEWEAIRRLRAGAGRVGLEHFRLVRRLGSGDLGNVYLCRLREPWSSSSMTTTAGGCLYAMKVVDKDALAFRKKLRRAEVERDILRTLDHPFLPTLYADFEASHYACLVMEFCPGGDLHVARQRQPGRRFTVSSTRFYVAETVLALEYLHMMGVVYRDLKPENVLVRGDGHIMLSDFDLSLKCDVVPKLLRPARSAAAGGKPPLPPPSSCVPPTIQPVLSCIFRGVHKCHHAKECAGGGAAAGNNGDGDGNDEEAETETAEPEVVVVEPVAARSKSFVGTHEYLAPEVISGQGHGSAVDWWTLGVFMYEMLYGRTPFKGESNEKTLINIIKQPVTFPRLAGAAAAGEWEEMKTAQDLMLQLLAKNPKKRLGSTMGSAEVKRHPFFKGVNWALVRSVRPPEVPAPPAPAPKKVMTMSKKERQEPYNYRPENHFDYF.

The interval 1–53 (MAAIKEESDYDSSRSSLTAPDSRRSWISDIGSSSSVSARSFGGDTPASSCRYK) is disordered. The segment covering 27-44 (ISDIGSSSSVSARSFGGD) has biased composition (low complexity). One can recognise a Protein kinase domain in the interval 80–443 (FRLVRRLGSG…SAEVKRHPFF (364 aa)). Residues 86 to 94 (LGSGDLGNV) and lysine 120 contribute to the ATP site. Aspartate 216 acts as the Proton acceptor in catalysis. Over residues 295–306 (GGGAAAGNNGDG) the composition is skewed to gly residues. 2 disordered regions span residues 295–320 (GGGA…TAEP) and 458–493 (EVPA…FDYF). The span at 307–319 (DGNDEEAETETAE) shows a compositional bias: acidic residues. In terms of domain architecture, AGC-kinase C-terminal spans 444–493 (KGVNWALVRSVRPPEVPAPPAPAPKKVMTMSKKERQEPYNYRPENHFDYF). Positions 474–493 (SKKERQEPYNYRPENHFDYF) are enriched in basic and acidic residues.

Belongs to the protein kinase superfamily. Ser/Thr protein kinase family.

It catalyses the reaction L-seryl-[protein] + ATP = O-phospho-L-seryl-[protein] + ADP + H(+). The catalysed reaction is L-threonyl-[protein] + ATP = O-phospho-L-threonyl-[protein] + ADP + H(+). Functionally, serine/threonine-protein kinase involved in the regulation of auxin signaling. The polypeptide is Protein kinase PINOID 2 (PID2) (Oryza sativa subsp. japonica (Rice)).